The sequence spans 769 residues: MGSYPDGFPGSMDELDFNKDFDLPPSSNQTLGLANGFYLDDLDFSSLDPPEAYPSQNNNNNNINNKAVAGDLLSSSSDDADFSDSVLKYISQVLMEEDMEEKPCMFHDALALQAAEKSLYEALGEKYPSSSSASSVDHPERLASDSPDGSCSGGAFSDYASTTTTTSSDSHWSVDGLENRPSWLHTPMPSNFVFQSTSRSNSVTGGGGGGNSAVYGSGFGDDLVSNMFKDDELAMQFKKGVEEASKFLPKSSQLFIDVDSYIPMNSGSKENGSEVFVKTEKKDETEHHHHHSYAPPPNRLTGKKSHWRDEDEDFVEERSNKQSAVYVEESELSEMFDKILVCGPGKPVCILNQNFPTESAKVVTAQSNGAKIRGKKSTSTSHSNDSKKETADLRTLLVLCAQAVSVDDRRTANEMLRQIREHSSPLGNGSERLAHYFANSLEARLAGTGTQIYTALSSKKTSAADMLKAYQTYMSVCPFKKAAIIFANHSMMRFTANANTIHIIDFGISYGFQWPALIHRLSLSRPGGSPKLRITGIELPQRGFRPAEGVQETGHRLARYCQRHNVPFEYNAIAQKWETIQVEDLKLRQGEYVVVNSLFRFRNLLDETVLVNSPRDAVLKLIRKINPNVFIPAILSGNYNAPFFVTRFREALFHYSAVFDMCDSKLAREDEMRLMYEKEFYGREIVNVVACEGTERVERPETYKQWQARLIRAGFRQLPLEKELMQNLKLKIENGYDKNFDVDQNGNWLLQGWKGRIVYASSLWVPSSS.

Disordered regions lie at residues 1-23 (MGSY…DFDL), 128-157 (PSSS…GAFS), 279-320 (TEKK…ERSN), and 364-388 (TAQS…DSKK). A GRAS domain is found at 384–765 (NDSKKETADL…RIVYASSLWV (382 aa)). The leucine repeat I (LRI) stretch occupies residues 391 to 451 (ADLRTLLVLC…EARLAGTGTQ (61 aa)). The interval 470–536 (YQTYMSVCPF…GGSPKLRITG (67 aa)) is VHIID. A VHIID motif is present at residues 501-505 (IHIID). The segment at 552–584 (ETGHRLARYCQRHNVPFEYNAIAQKWETIQVED) is leucine repeat II (LRII). Residues 593–687 (VVVNSLFRFR…KEFYGREIVN (95 aa)) form a PFYRE region. The interval 690–765 (ACEGTERVER…RIVYASSLWV (76 aa)) is SAW.

This sequence belongs to the GRAS family. As to expression, expressed in roots, shoots, flowers and siliques.

Its subcellular location is the nucleus. In terms of biological role, probable transcription factor involved in plant development. This is Scarecrow-like protein 14 (SCL14) from Arabidopsis thaliana (Mouse-ear cress).